The primary structure comprises 1466 residues: MEPAKPSGNNMGSNDERMQDYRPDPMMEESIQQILEDSLMCDTSFDDLILPGLESFGLIIPESSNNIESNNVEEGSNEDLKTLAEHKCKQGNDNDVIQSAMKLSGLYCDADITHTQPLSDNTHQDPIYSQETRIFSKTIQDPRIAAQTHRQCTSSASNLPSNESGSTQVRFASELPNQLLQPMYTSHNQNANLQNNFTSLPYQPYHDPYRDIESSYRESRNTNRGYDYNFRHHSYRPRGGNGKYNYYNPNSKYQQPYKRCFTRTYNRRGRGHRSYDCSDRSADLPYEHYTYPNYEQQNPDPRMNNYKDFTQLTNKFNFGANDYSMAFSTDSTHVQSDNYNHPTKAQTIPETTKTKKHKATKDNETSRGNQVLTSNDAISLSYRPSPIKLDIIKKIYDTDVIPLPKEALTANGSNRDVDIQKYKKAHIRCRSVQKKKERSSQTNKHDENHASSRSDLKERKSNEHEDKAVTKARDFSKLDPLLSPLPLTPEPAIDFADHTDKFYSTPEFNQIKQNLHRSKTSLQDTVPISKHTPRAPTKDNSYKKHHDSKDNYPKMKHSPGRTTSKKNTTNSNGHQNFKDVSVKNVSGKATSTSPKSKTHHYSSSSDEEGQYKSPVKTITPSPSPYCKLKNPSIMDKNSAKNHTASADKNLTDNSPIRSNLNPTAFNKSNNNKSITNSTSNSDECTDKKPNCNSTKNESKDPNRTCGKNSDKHLSKSCTMASKRAPSRASSRTSSRASSRASSRASSRASSRASSRASSRDSSRASSRAPSRASSRDSSRASSRDSSRDSNRASSKASSRASSRDSSRASSRDSSRASSKASRKASSRASSRASSRASSKASGKASSKASSRASSRAFSRNSSRASSRASSRASSRASSRASSRASSRDSSRALSRAFGRDSSRASSRASSRDSSRASSKASRKASSRASSRASSRASSRASSRELRQIYCDSNKRQTPPHDTSINTKFEISEIKFRCGEDLNFYKNTAARLQCFNHNDQFYNPRFRPHIRTNRKKSESTNDTDSESSMSRCKSHCRNSPDSLTIVRRKKHKSGSSSISSSIEENCRSNSHIVTGKEKFTPFYYQSSRTRSSSSSSSSSSASLSCSKSTLKTCRKTQNRDNKQIKSKSDSKHKTTNMSSDYESNRHADVFRNSPEAGEKFPLHNSSPFNTHEQSNHSENAIDEEQKKAPNITTSHLHQKQNVKLHNTKKCKKKRPRDDDSDSSIKNFCKKRISGAQKTESEVSEIDDLCYRDYVRLKERKVSEKFKIHRGRVATKDFQKLFRNTMRAFEYKQIPKKPCNDKNLKEAVYNICCNGLSNNAAIIMYFTRSKKVAQNIKIMQKELMIRPNITVSEAFKMNHAPPKYYDKDEIKRFIQLQKQGPQELWDKFENNTTHDLFTRHSDVKTMIIYAATPIDFVGAVKTCNKYAKDNPKEIVLRVCSIIDGDNPISIYNPISKDFKSKFSTLSKC.

8 disordered regions span residues 1-21 (MEPA…MQDY), 223-242 (NRGY…GGNG), 339-370 (YNHP…RGNQ), 428-472 (RCRS…VTKA), 517-965 (RSKT…TSIN), 1005-1068 (FRPH…CRSN), 1086-1179 (SRTR…SENA), and 1191-1223 (TTSH…DSSI). The segment covering 339–350 (YNHPTKAQTIPE) has biased composition (polar residues). The span at 428–437 (RCRSVQKKKE) shows a compositional bias: basic residues. 2 stretches are compositionally biased toward basic and acidic residues: residues 443 to 472 (NKHD…VTKA) and 536 to 553 (PTKD…DNYP). Composition is skewed to polar residues over residues 583–595 (KNVS…TSPK) and 640–665 (KNHT…PTAF). Over residues 666–681 (NKSNNNKSITNSTSNS) the composition is skewed to low complexity. Positions 696 to 713 (NESKDPNRTCGKNSDKHL) are enriched in basic and acidic residues. Low complexity-rich tracts occupy residues 720-756 (ASKR…SSRA) and 763-772 (RASSRAPSRA). Over residues 773 to 790 (SSRDSSRASSRDSSRDSN) the composition is skewed to basic and acidic residues. The span at 791-800 (RASSKASSRA) shows a compositional bias: low complexity. Basic and acidic residues predominate over residues 801–814 (SSRDSSRASSRDSS). 2 stretches are compositionally biased toward low complexity: residues 826–884 (SRAS…SSRA) and 926–940 (SRAS…SSRA). Polar residues predominate over residues 955-965 (RQTPPHDTSIN). The segment at 989–1037 (ARLQCFNHNDQFYNPRFRPHIRTNRKKSESTNDTDSESSMSRCKSHCRN) is interaction with human UBE2I. Low complexity-rich tracts occupy residues 1019–1029 (TNDTDSESSMS), 1053–1068 (GSSS…CRSN), and 1086–1110 (SRTR…STLK). Residues 1116–1131 (QNRDNKQIKSKSDSKH) show a composition bias toward basic and acidic residues. The span at 1162-1177 (HNSSPFNTHEQSNHSE) shows a compositional bias: polar residues. Over residues 1195-1213 (LHQKQNVKLHNTKKCKKKR) the composition is skewed to basic residues.

Belongs to the herpesviridae IE2 family. In terms of assembly, interacts with human UBE2I in the nucleus. Although this interaction does not promote IE2 sumoylation, it represses transactivation activity.

The protein localises to the host nucleus. In terms of biological role, transcriptional transactivator. The sequence is that of Immediate-early protein 2 (U90/U86) from Homo sapiens (Human).